Consider the following 445-residue polypeptide: Protein phosphatase 2C 53 (445 aa).

One can recognise a PPM-type phosphatase domain in the interval 124–435 (LWGLESICGR…DNITVVVIDL (312 aa)). Mn(2+) is bound by residues aspartate 180, glycine 181, aspartate 362, and aspartate 426.

It belongs to the PP2C family. As to quaternary structure, interacts with PYL10, SAPK8 and SAPK10. Binding to PYL10 is dependent on the presence of abscisic acid (ABA). Interacts with PYL3, PYL5, PYL9 and PYL10. Binding to PYL9 and PYL10 is dependent on the presence of ABA. The cofactor is Mg(2+). Mn(2+) serves as cofactor. In terms of tissue distribution, expressed in leaf blades, leaf sheaths and lamina joints. Expressed at low levels in roots, stems, flowers and panicles.

The protein localises to the cytoplasm. The protein resides in the cytosol. It is found in the nucleus. It carries out the reaction O-phospho-L-seryl-[protein] + H2O = L-seryl-[protein] + phosphate. It catalyses the reaction O-phospho-L-threonyl-[protein] + H2O = L-threonyl-[protein] + phosphate. Repressed by abscisic acid-bound PYL1. Protein phosphatase that acts as a negative regulator of abscisic acid (ABA) signaling. Involved in the regulation of root architecture development and drought resistance. Can dephosphorylate SAPK8 and SAPK10 in vitro. Together with PYL10, SAPK8 and SAPK10, may form an ABA signaling module involved in stress response. This chain is Protein phosphatase 2C 53, found in Oryza sativa subsp. japonica (Rice).